An 844-amino-acid polypeptide reads, in one-letter code: Nitrogen permease regulator 3 (844 aa).

The N-terminal stretch at 1 to 21 is a signal peptide; sequence MSTNLPNSCLVQIALTVSTHS. Disordered regions lie at residues 53–113 and 246–310; these read EYTD…TFIN and GRWK…DYEP. Low complexity predominate over residues 57–94; sequence SENNSSSDDYSSGLSDSELSTDYADCSSDASESSLDSL. Over residues 103 to 113 the composition is skewed to polar residues; the sequence is VNSSTNNTFIN. A compositionally biased stretch (basic residues) spans 246-262; it reads GRWKKSKKRKQASKRSA. The span at 263-273 shows a compositional bias: low complexity; that stretch reads RSSTARNSISR. Residues 274–293 show a composition bias toward polar residues; sequence NSVGRNSIGRNRSKTESQGH. Acidic residues predominate over residues 297-307; the sequence is VEEPADDENSD.

It belongs to the NPR3 family.

Its function is as follows. Mediates inactivation of the TORC1 complex in response to amino acid starvation. Required for meiotic nuclear division. This chain is Nitrogen permease regulator 3 (NPR3), found in Kluyveromyces lactis (strain ATCC 8585 / CBS 2359 / DSM 70799 / NBRC 1267 / NRRL Y-1140 / WM37) (Yeast).